The chain runs to 90 residues: Acylphosphatase (90 aa).

Residues 3–90 form the Acylphosphatase-like domain; it reads KKQFVVYGIV…HSFGLFSVEH (88 aa). Active-site residues include Arg-18 and Asn-36.

This sequence belongs to the acylphosphatase family.

The enzyme catalyses an acyl phosphate + H2O = a carboxylate + phosphate + H(+). This is Acylphosphatase (acyP) from Mannheimia succiniciproducens (strain KCTC 0769BP / MBEL55E).